Here is a 331-residue protein sequence, read N- to C-terminus: Malate dehydrogenase (331 aa).

NAD(+) is bound at residue 14-20 (GAAGSIG). Substrate is bound by residues Arg95 and Arg101. NAD(+) contacts are provided by residues Asn108, Gln115, and 132–134 (VGN). 2 residues coordinate substrate: Asn134 and Arg165. His190 functions as the Proton acceptor in the catalytic mechanism.

The protein belongs to the LDH/MDH superfamily. MDH type 2 family.

The catalysed reaction is (S)-malate + NAD(+) = oxaloacetate + NADH + H(+). Functionally, catalyzes the reversible oxidation of malate to oxaloacetate. This is Malate dehydrogenase from Rhodococcus jostii (strain RHA1).